Here is a 439-residue protein sequence, read N- to C-terminus: Histidine--tRNA ligase (439 aa).

The protein belongs to the class-II aminoacyl-tRNA synthetase family. Homodimer.

It is found in the cytoplasm. It catalyses the reaction tRNA(His) + L-histidine + ATP = L-histidyl-tRNA(His) + AMP + diphosphate + H(+). The chain is Histidine--tRNA ligase from Leptospira interrogans serogroup Icterohaemorrhagiae serovar copenhageni (strain Fiocruz L1-130).